We begin with the raw amino-acid sequence, 255 residues long: SLA class II histocompatibility antigen, DQ haplotype D alpha chain (255 aa).

The first 23 residues, 1 to 23 (MVPGRVLMWGALALTAVMSACGG), serve as a signal peptide directing secretion. An alpha-1 region spans residues 24 to 120 (EDIAADHVAS…QVPEVTVFPK (97 aa)). Residues 24-217 (EDIAADHVAS…IPAPMSELTE (194 aa)) are Extracellular-facing. Asn-104 and Asn-144 each carry an N-linked (GlcNAc...) asparagine glycan. Residues 113 to 205 (PEVTVFPKSP…LDKPLLKHWE (93 aa)) form the Ig-like C1-type domain. Residues 121-204 (SPVMLGQPNT…GLDKPLLKHW (84 aa)) form an alpha-2 region. Cysteines 133 and 189 form a disulfide. Positions 205–217 (EPEIPAPMSELTE) are connecting peptide. Residues 218–240 (TVVCALGLIVGLVGIVVGTVFII) form a helical membrane-spanning segment. Residues 241–255 (QGLRSGGPSRHQGSL) lie on the Cytoplasmic side of the membrane.

It belongs to the MHC class II family.

The protein resides in the membrane. The sequence is that of SLA class II histocompatibility antigen, DQ haplotype D alpha chain from Sus scrofa (Pig).